The following is a 634-amino-acid chain: Pescadillo homolog (634 aa).

In terms of domain architecture, BRCT spans 321–414 (RLRTLFKGLK…QLLPTNKYFM (94 aa)). 3 disordered regions span residues 437–473 (EEKA…EEIE), 491–561 (EYKK…RKAE), and 603–634 (NIDA…LKMA). The residue at position 453 (Ser453) is a Phosphoserine. Acidic residues-rich tracts occupy residues 454–473 (DDDD…EEIE) and 501–527 (VNED…DVEQ). Coiled-coil stretches lie at residues 460–546 (SDAE…KVES) and 596–629 (LLRK…AAAK). Composition is skewed to basic and acidic residues over residues 528–548 (LDDK…ESGK) and 603–623 (NIDA…KKAA). Over residues 624 to 634 (AEAAAKALKMA) the composition is skewed to low complexity.

It belongs to the pescadillo family.

Its subcellular location is the nucleus. The protein resides in the nucleolus. It is found in the nucleoplasm. Required for maturation of ribosomal RNAs and formation of the large ribosomal subunit. In Drosophila willistoni (Fruit fly), this protein is Pescadillo homolog.